Consider the following 573-residue polypeptide: 3-oxosteroid 1-dehydrogenase (573 aa).

7-36 (DLIVVGSGAGACWAPIRAQEQGLKTLVVEK) provides a ligand contact to FAD.

This sequence belongs to the FAD-dependent oxidoreductase 2 family. 3-oxosteroid dehydrogenase subfamily. It depends on FAD as a cofactor.

The protein localises to the cell inner membrane. The catalysed reaction is a 3-oxosteroid + A = a 3-oxo-Delta(1)-steroid + AH2. The protein operates within lipid metabolism; steroid degradation. Dehydrogenates steroids by introducing a double bond in steroid ring A. The polypeptide is 3-oxosteroid 1-dehydrogenase (Comamonas testosteroni (Pseudomonas testosteroni)).